Reading from the N-terminus, the 313-residue chain is Ribosomal RNA small subunit methyltransferase H (313 aa).

Residues Ala-33–His-35, Glu-52, Phe-80, Asp-101, and Gln-108 each bind S-adenosyl-L-methionine.

It belongs to the methyltransferase superfamily. RsmH family.

Its subcellular location is the cytoplasm. The enzyme catalyses cytidine(1402) in 16S rRNA + S-adenosyl-L-methionine = N(4)-methylcytidine(1402) in 16S rRNA + S-adenosyl-L-homocysteine + H(+). Specifically methylates the N4 position of cytidine in position 1402 (C1402) of 16S rRNA. In Spiroplasma kunkelii, this protein is Ribosomal RNA small subunit methyltransferase H.